The chain runs to 393 residues: S-adenosylmethionine synthase (393 aa).

Residue glutamate 9 coordinates Mg(2+). Histidine 15 lines the ATP pocket. Position 43 (glutamate 43) interacts with K(+). Residues glutamate 56 and glutamine 99 each contribute to the L-methionine site. ATP contacts are provided by residues 167–169 (DGK), 235–238 (SGRF), aspartate 246, 252–253 (RK), alanine 269, lysine 273, and lysine 277. Position 246 (aspartate 246) interacts with L-methionine. L-methionine is bound at residue lysine 277.

Belongs to the AdoMet synthase family. Homotetramer. Requires Mn(2+) as cofactor. It depends on Mg(2+) as a cofactor. Co(2+) is required as a cofactor. K(+) serves as cofactor.

The protein localises to the cytoplasm. The enzyme catalyses L-methionine + ATP + H2O = S-adenosyl-L-methionine + phosphate + diphosphate. It functions in the pathway amino-acid biosynthesis; S-adenosyl-L-methionine biosynthesis; S-adenosyl-L-methionine from L-methionine: step 1/1. Functionally, catalyzes the formation of S-adenosylmethionine from methionine and ATP. The reaction comprises two steps that are both catalyzed by the same enzyme: formation of S-adenosylmethionine (AdoMet) and triphosphate, and subsequent hydrolysis of the triphosphate. This Gossypium hirsutum (Upland cotton) protein is S-adenosylmethionine synthase (SAMS).